The sequence spans 116 residues: Large ribosomal subunit protein bL20 (116 aa).

Belongs to the bacterial ribosomal protein bL20 family.

In terms of biological role, binds directly to 23S ribosomal RNA and is necessary for the in vitro assembly process of the 50S ribosomal subunit. It is not involved in the protein synthesizing functions of that subunit. The protein is Large ribosomal subunit protein bL20 of Fusobacterium nucleatum subsp. nucleatum (strain ATCC 25586 / DSM 15643 / BCRC 10681 / CIP 101130 / JCM 8532 / KCTC 2640 / LMG 13131 / VPI 4355).